The chain runs to 707 residues: Lipase maturation factor 2 (707 aa).

10 helical membrane-spanning segments follow: residues 10-30 (LFLQGVAAVFMFAFASLYTQI), 78-98 (LELLSLLGALVALGALLLSPL), 102-122 (VIYLLLWAAYLSACQVGQVFL), 123-143 (YFQWDSLLLETGFLAVLVAPL), 165-185 (DLPFWLVRWLLFRLMFASGVV), 227-247 (LSVVATFLIEIAVPPLFFAPI), 259-279 (VLLQVLIIITGNYNFFNLMTL), 310-330 (ALLATLSLLLELAVYGLLAYG), 364-384 (LTLPTVWLGVASLVWELLSAL), and 399-419 (AVVQLSLVGTATVALFLISLV). 2 N-linked (GlcNAc...) asparagine glycosylation sites follow: asparagine 489 and asparagine 616. A helical transmembrane segment spans residues 637–657 (ALLWGLLMAVGAVRFVQALLA). The segment at 665-707 (PLAPVSGEKRRPASQKDSGAASEQATAAPNPCSSSSRTTRRKK) is disordered. Over residues 679–691 (QKDSGAASEQATA) the composition is skewed to polar residues.

This sequence belongs to the lipase maturation factor family.

It is found in the endoplasmic reticulum membrane. Involved in the maturation of specific proteins in the endoplasmic reticulum. May be required for maturation and transport of active lipoprotein lipase (LPL) through the secretory pathway. This chain is Lipase maturation factor 2 (LMF2), found in Homo sapiens (Human).